The primary structure comprises 373 residues: Cytoplasmic envelopment protein 2 (373 aa).

The disordered stretch occupies residues Met-1–Val-35. Residues Pro-9–Leu-19 are compositionally biased toward pro residues. The span at Pro-22–Val-35 shows a compositional bias: basic and acidic residues.

It belongs to the herpesviridae cytoplasmic envelopment protein 2 family. In terms of assembly, interacts with cytoplasmic envelopment protein 3 and with the capsid.

Its subcellular location is the virion tegument. It localises to the host cytoplasm. The protein resides in the host nucleus. Its function is as follows. Plays a critical role in cytoplasmic virus egress. Participates in the final step of tegumentation and envelope acquisition within the host cytoplasm by directly interacting with the capsid. Upon virion binding to target cell, a signaling cascade is triggered to disrupt the interaction with the capsid, thereby preparing capsid uncoating. In Homo sapiens (Human), this protein is Cytoplasmic envelopment protein 2 (UL16).